The sequence spans 768 residues: Solute carrier family 45 member 4 (768 aa).

The tract at residues 1–32 (MKMAPQNADPESMQVQELSVPLPDPQKAGGAE) is disordered. 6 helical membrane passes run 63 to 83 (EFCY…IGLP), 86 to 106 (YYSL…PLIG), 123 to 143 (ILAL…GSAI), 155 to 175 (PIGI…ADAT), 196 to 216 (LNIH…LGGL), and 233 to 253 (VLFF…LFSI). Disordered regions lie at residues 259–284 (SPQQ…PAFP) and 379–419 (NEAK…RHAF). Ser-424 and Ser-454 each carry phosphoserine. Residues 460–489 (DMQKRQRQHRHRNQSGATTSSGDTESEEGE) form a disordered region. Residues 473–482 (QSGATTSSGD) show a composition bias toward low complexity. The residue at position 485 (Ser-485) is a Phosphoserine. Helical transmembrane passes span 518-538 (TWFS…QVIF), 560-580 (MGCW…ALLQ), 592-612 (VIYV…AMFP), 614-634 (VYVA…ISYC), 666-686 (ILSC…GGVV), and 695-715 (IPMV…FLVI). The disordered stretch occupies residues 726–768 (EQKGLSSPLAGEGRAGGNSEKPTVLKLTRKEGLQGPVETESVV). At Ser-732 the chain carries Phosphoserine.

This sequence belongs to the glycoside-pentoside-hexuronide (GPH) cation symporter transporter (TC 2.A.2) family.

The protein resides in the membrane. The catalysed reaction is sucrose(out) + H(+)(out) = sucrose(in) + H(+)(in). Proton-associated sucrose transporter. May be able to transport also glucose and fructose. The polypeptide is Solute carrier family 45 member 4 (Homo sapiens (Human)).